We begin with the raw amino-acid sequence, 226 residues long: Ribonuclease 3 (226 aa).

An RNase III domain is found at Ile-6–Asp-128. Glu-41 contacts Mg(2+). Asp-45 is an active-site residue. 2 residues coordinate Mg(2+): Asp-114 and Glu-117. Glu-117 is a catalytic residue. In terms of domain architecture, DRBM spans Asp-155–Leu-225.

It belongs to the ribonuclease III family. Homodimer. Mg(2+) serves as cofactor.

Its subcellular location is the cytoplasm. It catalyses the reaction Endonucleolytic cleavage to 5'-phosphomonoester.. Functionally, digests double-stranded RNA. Involved in the processing of primary rRNA transcript to yield the immediate precursors to the large and small rRNAs (23S and 16S). Processes some mRNAs, and tRNAs when they are encoded in the rRNA operon. Processes pre-crRNA and tracrRNA of type II CRISPR loci if present in the organism. The protein is Ribonuclease 3 of Klebsiella pneumoniae (strain 342).